Here is a 687-residue protein sequence, read N- to C-terminus: Adhesion G-protein coupled receptor G1 (687 aa).

A signal peptide spans 1–25; sequence MTAQSLLQTTLFLLSLLFLVQGAHG. Heparin is bound at residue 26 to 33; sequence RGHREDFR. The Extracellular portion of the chain corresponds to 26-402; sequence RGHREDFRFC…VEVDAVHKHY (377 aa). 2 disulfides stabilise this stretch: Cys-35–Cys-91 and Cys-121–Cys-177. Residues Asn-39, Asn-148, Asn-156, and Asn-171 are each glycosylated (N-linked (GlcNAc...) asparagine). Residue 190-200 participates in heparin binding; the sequence is LKHPQKASRRP. In terms of domain architecture, GAIN-B spans 224 to 395; it reads DTVSFEEDRV…AVLMVSSVEV (172 aa). Residues Asn-234, Asn-303, Asn-324, and Asn-341 are each glycosylated (N-linked (GlcNAc...) asparagine). 2 disulfide bridges follow: Cys-346–Cys-377 and Cys-366–Cys-379. The segment at 346–395 is GPS; that stretch reads CVFWVEDPTLSNPGRWSSAGCETVRRETQTSCFCNHLTYFAVLMVSSVEV. The stachel stretch occupies residues 384-397; the sequence is YFAVLMVSSVEVDA. A helical membrane pass occupies residues 403–423; it reads LSLLSYVGCVVSALACVVTIA. Residues 424 to 442 lie on the Cytoplasmic side of the membrane; the sequence is AYLCSRRKPRDYTIKVHMN. A helical membrane pass occupies residues 443-463; it reads LLLAVFLLDVSFLLSEPVALT. At 464 to 470 the chain is on the extracellular side; it reads GSQSGCR. Residues 471–491 traverse the membrane as a helical segment; that stretch reads ASAIFLHFSLLACLSWMGLEG. Residues 492–512 lie on the Cytoplasmic side of the membrane; sequence YNLYRLVVEVFGTYIPGYLLK. Residues 513-533 form a helical membrane-spanning segment; sequence LSAMGWGFPIFLVTLVALVDV. The Extracellular portion of the chain corresponds to 534-570; it reads DNYGPIILAVHRTPESVIYPSMCWIRDSLVSYITNLG. A helical membrane pass occupies residues 571–591; the sequence is LFSLVFLFNMAMLGTMVVQIL. At 592 to 603 the chain is on the cytoplasmic side; it reads RLRPHTQKWSHV. Residues 604 to 624 form a helical membrane-spanning segment; it reads LTLLGLSLVLGLPWALIFFSF. The Extracellular portion of the chain corresponds to 625–630; sequence ASGTFQ. Residues 631–651 form a helical membrane-spanning segment; it reads LVVLYLFSIITSFQGFLIFLW. Residues 652 to 687 are Cytoplasmic-facing; it reads YWSMRLQARGGPSPLKSNSDSARLPISTGSTSSSRI. The disordered stretch occupies residues 664–687; it reads SPLKSNSDSARLPISTGSTSSSRI. Over residues 666-687 the composition is skewed to polar residues; it reads LKSNSDSARLPISTGSTSSSRI.

Belongs to the G-protein coupled receptor 2 family. LN-TM7 subfamily. Heterodimer of 2 chains generated by proteolytic processing; the large extracellular N-terminal fragment (ADGRG1 NT) and the membrane-bound C-terminal fragment (ADGRG1-CT) predominantly remain associated and non-covalently linked. ADGRG1 NT self-associates in a trans-trans manner; the homophilic interaction enhances receptor signaling. Interacts with TGM2. Interacts with heparin; leading to the reduction of ADGRG1 shedding. Interacts with COL3A1. Part of a GPCR-tetraspanin complex at least consisting of ADGRG1, CD81, eventually CD9, and GNA11 in which CD81 is enhancing the association of ADGRG1 with GNA11. Post-translationally, autoproteolytically cleaved into 2 fragments; the large extracellular N-terminal fragment (ADGRG1 NT) and the membrane-bound C-terminal fragment (ADGRG1 CT) predominantly remain associated and non-covalently linked. Shedding to yield the secreted ADGRG1 N-terminal fragment seems to involve metalloprotease(s). Ubiquitinated. Undergoes polyubiquitination upon activation.

The protein localises to the cell membrane. It localises to the secreted. Its subcellular location is the membrane raft. Its activity is regulated as follows. Forms a heterodimer of 2 chains generated by proteolytic processing that remain associated through non-covalent interactions mediated by the GAIN-B domain. In the inactivated receptor, the Stachel sequence (also named stalk) is embedded in the GAIN-B domain, where it adopts a beta-strand conformation. On activation, the Stachel moves into the 7 transmembrane region and adopts a twisted hook-shaped configuration that forms contacts within the receptor, leading to coupling of a G-alpha protein, which activates signaling. The cleaved GAIN-B and N-terminal domains can then dissociate from the rest of the receptor. Its function is as follows. Adhesion G-protein coupled receptor (aGPCR) for steroid hormone 17alpha-hydroxypregnenolone (17-OH), which is involved in cell adhesion and cell-cell interactions. Ligand binding causes a conformation change that triggers signaling via guanine nucleotide-binding proteins (G proteins) and modulates the activity of downstream effectors, such as RhoA pathway. ADGRG1 is coupled to G(12) and/or G(13) G proteins (GNA12 and GNA13, respectively) and mediates the activation Rho small GTPases. Acts as a potent suppressor of ferroptosis: binding to 17-OH-binding initiates signaling that down-regulates CD36 and alleviates ferroptosis-induced liver injury. Ligand-binding also induces cell adhesion activity via association with proteins such as collagen III/COL3A1 and TGM2. Mediates cell matrix adhesion in developing neurons and hematopoietic stem cells. Involved in cortical development, specifically in maintenance of the pial basement membrane integrity and in cortical lamination: association with COL3A1 in the developing brain inhibits neuronal migration via activation of the RhoA pathway. Together with TGM2, acts as a regulator of myelination and myelin repair in oligodendrocyte precursor cells. Acts as a hemostatic sensor of shear force: G protein-coupled receptor signaling is activated in response to shear force in platelets, promoting G(13) G protein signaling, and platelet shape change and aggregation in a COL3A1-dependent manner. Acts as an inhibitor of VEGFA production thereby inhibiting angiogenesis through a signaling pathway mediated by PRKCA. Plays a role in the maintenance of hematopoietic stem cells in bone marrow niche. Plays an essential role in testis development. The polypeptide is Adhesion G-protein coupled receptor G1 (ADGRG1) (Macaca mulatta (Rhesus macaque)).